The following is a 386-amino-acid chain: Cell division protein FtsZ (386 aa).

Residues Gly-20–Asn-24, Gly-107–Gly-109, Glu-138, Arg-142, and Asn-186 each bind GTP. The disordered stretch occupies residues Leu-350–Ile-377.

The protein belongs to the FtsZ family. As to quaternary structure, homodimer. Polymerizes to form a dynamic ring structure in a strictly GTP-dependent manner. Interacts directly with several other division proteins.

The protein localises to the cytoplasm. Essential cell division protein that forms a contractile ring structure (Z ring) at the future cell division site. The regulation of the ring assembly controls the timing and the location of cell division. One of the functions of the FtsZ ring is to recruit other cell division proteins to the septum to produce a new cell wall between the dividing cells. Binds GTP and shows GTPase activity. The protein is Cell division protein FtsZ of Sodalis glossinidius.